We begin with the raw amino-acid sequence, 46 residues long: KECMVDGTVCYIHNHNDCCGSCLCLNGPIARPWEMMVGNCKCGPKA.

Intrachain disulfides connect Cys3/Cys19, Cys10/Cys22, Cys18/Cys42, and Cys24/Cys40. The keys region for toxin activity stretch occupies residues 31–33 (RPW).

Belongs to the neurotoxin 16 (SFI) family. In terms of tissue distribution, expressed by the venom gland.

Its subcellular location is the secreted. Its function is as follows. Insecticidal toxin. It inhibits insect voltage-gated sodium channels (Nav) by partially blocking the channel pore in DUM neurons from the American cockroach, not by acting as a gating modifier. The inhibition is only partially reversible after prolonged washout. In vivo, the toxin causes flaccid paralysis followed by death when injected into Heliothis virescens larvae. It also causes uncoordinated movements followed by full paralysis to sheep blowflies (Lucilia cuprina). When the toxin is fused to snowdrop lectin, it is orally active against larvae of the tomato moth (Laconobia oleracea), the rice brown planthopper (Nilaparvata lugens), and the peach-potato aphid (Myzus persicae). This chain is Mu-segestritoxin-Sf1c, found in Segestria florentina (Tube-web spider).